An 876-amino-acid polypeptide reads, in one-letter code: Alanine--tRNA ligase (876 aa).

Positions 568, 572, 670, and 674 each coordinate Zn(2+).

The protein belongs to the class-II aminoacyl-tRNA synthetase family. Zn(2+) serves as cofactor.

It localises to the cytoplasm. The enzyme catalyses tRNA(Ala) + L-alanine + ATP = L-alanyl-tRNA(Ala) + AMP + diphosphate. In terms of biological role, catalyzes the attachment of alanine to tRNA(Ala) in a two-step reaction: alanine is first activated by ATP to form Ala-AMP and then transferred to the acceptor end of tRNA(Ala). Also edits incorrectly charged Ser-tRNA(Ala) and Gly-tRNA(Ala) via its editing domain. The protein is Alanine--tRNA ligase of Geotalea uraniireducens (strain Rf4) (Geobacter uraniireducens).